Reading from the N-terminus, the 2002-residue chain is Methylcytosine dioxygenase TET2 (2002 aa).

A compositionally biased stretch (basic and acidic residues) spans Met-1–Gly-11. The interval Met-1–Pro-22 is disordered. Residues Ser-15, Ser-75, and Ser-99 each carry the phosphoserine modification. Basic and acidic residues predominate over residues Lys-113–Asn-124. Disordered stretches follow at residues Lys-113–Val-154, His-266–Lys-287, Gly-349–Glu-368, Asp-390–Asn-488, Leu-703–Leu-748, Val-930–His-949, and Asp-1075–Arg-1095. Polar residues-rich tracts occupy residues Gly-126 to Asp-143 and Pro-267 to Glu-283. Residues Thr-397–Pro-416 show a composition bias toward pro residues. 2 stretches are compositionally biased toward polar residues: residues Arg-479 to Asn-488 and Leu-703 to Leu-718. The span at Gln-731 to Leu-748 shows a compositional bias: low complexity. Composition is skewed to polar residues over residues Gly-935–Lys-944 and Leu-1081–Arg-1095. Phosphoserine occurs at positions 1107 and 1109. Positions 1133, 1135, 1193, 1219, and 1221 each coordinate Zn(2+). Arg-1261 contacts 2-oxoglutarate. The Zn(2+) site is built by Cys-1271, Cys-1273, Cys-1289, and Cys-1298. The tract at residues Ser-1290–Ser-1303 is interaction with DNA. Lys-1299 is covalently cross-linked (Glycyl lysine isopeptide (Lys-Gly) (interchain with G-Cter in ubiquitin)). Cys-1358 contributes to the Zn(2+) binding site. Cys-1374 provides a ligand contact to 2-oxoglutarate. His-1380 contributes to the Zn(2+) binding site. Residues His-1382 and Asp-1384 each contribute to the Fe cation site. Asn-1387 lines the substrate pocket. His-1416 is a binding site for 2-oxoglutarate. 2 disordered regions span residues Ala-1475–Gln-1507 and Val-1521–Asp-1587. A compositionally biased stretch (low complexity) spans Glu-1477–Asn-1487. Residues Pro-1496–Gln-1507 are compositionally biased toward polar residues. Low complexity-rich tracts occupy residues Gln-1523 to Gln-1532 and Gln-1539 to His-1551. Over residues Thr-1554–Pro-1568 the composition is skewed to polar residues. Asymmetric dimethylarginine is present on Arg-1682. His-1881 provides a ligand contact to Fe cation. Arg-1896–Ser-1898 serves as a coordination point for 2-oxoglutarate. Substrate is bound at residue Tyr-1902–His-1904. Zn(2+) is bound at residue His-1912. Positions Cys-1932–Glu-1961 are disordered. Residues Arg-1951–Ser-1960 show a composition bias toward basic and acidic residues.

It belongs to the TET family. Interacts with HCFC1. Interacts with OGT. Interacts with PROSER1; this interaction mediates TET2 O-GlcNAcylation and stability by promoting the interaction between OGT and TET2. Directly interacts (via C-terminus) with the DCAF1 component of the CRL4(VprBP) E3 ubiquitin-protein ligase complex. Requires Fe(2+) as cofactor. Zn(2+) serves as cofactor. Post-translationally, may be glycosylated. It is unclear whether interaction with OGT leads to GlcNAcylation. According to a report, it is not GlcNAcylated by OGT. In contrast, another group reports GlcNAcylation by OGT in mouse ortholog. In terms of processing, monoubiquitinated at Lys-1299 by the DCX (DDB1-CUL4-X-box) E3 ubiquitin-protein ligase complex called CRL4(VprBP) or CUL4A-RBX1-DDB1-DCAF1/VPRBP complex; this modification promotes binding to DNA. Acetylated. Deacetylase HDAC6 acts as a valine sensor by binding to valine through its primate-specific SE14 repeat region and deacetylates TET2 following valine deprivation which promotes TET2-dependent DNA demethylation. In terms of tissue distribution, broadly expressed. Highly expressed in hematopoietic cells; highest expression observed in granulocytes. Expression is reduced in granulocytes from peripheral blood of patients affected by myelodysplastic syndromes.

Its subcellular location is the nucleus. The protein localises to the chromosome. The catalysed reaction is a 5-methyl-2'-deoxycytidine in DNA + 2-oxoglutarate + O2 = a 5-hydroxymethyl-2'-deoxycytidine in DNA + succinate + CO2. It carries out the reaction a 5-hydroxymethyl-2'-deoxycytidine in DNA + 2-oxoglutarate + O2 = a 5-formyl-2'-deoxycytidine in DNA + succinate + CO2 + H2O. It catalyses the reaction a 5-formyl-2'-deoxycytidine in DNA + 2-oxoglutarate + O2 = a 5-carboxyl-2'-deoxycytidine in DNA + succinate + CO2 + H(+). Dioxygenase that catalyzes the conversion of the modified genomic base 5-methylcytosine (5mC) into 5-hydroxymethylcytosine (5hmC) and plays a key role in active DNA demethylation. Has a preference for 5-hydroxymethylcytosine in CpG motifs. Also mediates subsequent conversion of 5hmC into 5-formylcytosine (5fC), and conversion of 5fC to 5-carboxylcytosine (5caC). Conversion of 5mC into 5hmC, 5fC and 5caC probably constitutes the first step in cytosine demethylation. Methylation at the C5 position of cytosine bases is an epigenetic modification of the mammalian genome which plays an important role in transcriptional regulation. In addition to its role in DNA demethylation, also involved in the recruitment of the O-GlcNAc transferase OGT to CpG-rich transcription start sites of active genes, thereby promoting histone H2B GlcNAcylation by OGT. This chain is Methylcytosine dioxygenase TET2 (TET2), found in Homo sapiens (Human).